Reading from the N-terminus, the 119-residue chain is MILGIGIDLVEIKRFEQLARQTDNCFAKRLLTSTEYAHYAKLRKDSEKSSFLAVHWSLKEAIYKAVNHIKPLFSQLEITKKNQRYNCQIDPKIELLLSVSYSSNNITAICLAQQTPWKN.

Residues Asp8 and Glu60 each contribute to the Mg(2+) site.

It belongs to the P-Pant transferase superfamily. AcpS family. It depends on Mg(2+) as a cofactor.

The protein localises to the cytoplasm. It catalyses the reaction apo-[ACP] + CoA = holo-[ACP] + adenosine 3',5'-bisphosphate + H(+). Functionally, transfers the 4'-phosphopantetheine moiety from coenzyme A to a Ser of acyl-carrier-protein. In Mycoplasma pneumoniae (strain ATCC 29342 / M129 / Subtype 1) (Mycoplasmoides pneumoniae), this protein is Holo-[acyl-carrier-protein] synthase.